A 113-amino-acid polypeptide reads, in one-letter code: U11-theraphotoxin-Hhn1a (113 aa).

An N-terminal signal peptide occupies residues Met1–Ala21. Positions Asp22–Arg74 are excised as a propeptide. Over residues Leu60–Asn69 the composition is skewed to basic and acidic residues. Residues Leu60–Asp83 form a disordered region. Disulfide bonds link Cys75-Cys90, Cys82-Cys95, and Cys89-Cys110.

This sequence belongs to the neurotoxin 14 (magi-1) family. 01 (HNTX-16) subfamily. As to expression, expressed by the venom gland.

It is found in the secreted. Its function is as follows. Probable ion channel inhibitor. The sequence is that of U11-theraphotoxin-Hhn1a from Cyriopagopus hainanus (Chinese bird spider).